Consider the following 98-residue polypeptide: Small ribosomal subunit protein uS19 (98 aa).

A disordered region spans residues 77–98 (TRTFRGHAGGKAEKGGSAPKRK).

This sequence belongs to the universal ribosomal protein uS19 family.

In terms of biological role, protein S19 forms a complex with S13 that binds strongly to the 16S ribosomal RNA. In Chlorobium luteolum (strain DSM 273 / BCRC 81028 / 2530) (Pelodictyon luteolum), this protein is Small ribosomal subunit protein uS19.